Consider the following 161-residue polypeptide: Cyclic pyranopterin monophosphate synthase (161 aa).

Substrate contacts are provided by residues 75–77 and 115–116; these read MCH and ME. Asp-130 is a catalytic residue.

This sequence belongs to the MoaC family. Homohexamer; trimer of dimers.

It catalyses the reaction (8S)-3',8-cyclo-7,8-dihydroguanosine 5'-triphosphate = cyclic pyranopterin phosphate + diphosphate. Its pathway is cofactor biosynthesis; molybdopterin biosynthesis. Catalyzes the conversion of (8S)-3',8-cyclo-7,8-dihydroguanosine 5'-triphosphate to cyclic pyranopterin monophosphate (cPMP). This is Cyclic pyranopterin monophosphate synthase from Bacillus thuringiensis subsp. konkukian (strain 97-27).